The following is a 122-amino-acid chain: Large ribosomal subunit protein uL14 (122 aa).

This sequence belongs to the universal ribosomal protein uL14 family. In terms of assembly, part of the 50S ribosomal subunit. Forms a cluster with proteins L3 and L19. In the 70S ribosome, L14 and L19 interact and together make contacts with the 16S rRNA in bridges B5 and B8.

Binds to 23S rRNA. Forms part of two intersubunit bridges in the 70S ribosome. This chain is Large ribosomal subunit protein uL14, found in Novosphingobium aromaticivorans (strain ATCC 700278 / DSM 12444 / CCUG 56034 / CIP 105152 / NBRC 16084 / F199).